The following is a 240-amino-acid chain: Glutathione-independent glyoxalase hsp3102 (240 aa).

Active-site residues include Cys-141, His-142, and Glu-175.

This sequence belongs to the peptidase C56 family. HSP31-like subfamily.

It is found in the cytoplasm. Its subcellular location is the nucleus. It catalyses the reaction methylglyoxal + H2O = (R)-lactate + H(+). Its function is as follows. Catalyzes the conversion of methylglyoxal (MG) to D-lactate in a single glutathione (GSH)-independent step. May play a role in detoxifying endogenously produced glyoxals. Involved in protection against reactive oxygen species (ROS). The polypeptide is Glutathione-independent glyoxalase hsp3102 (Schizosaccharomyces pombe (strain 972 / ATCC 24843) (Fission yeast)).